Reading from the N-terminus, the 315-residue chain is Neurogenic differentiation factor 4 (315 aa).

The disordered stretch occupies residues 39 to 71 (ERGSIDGEEDDEEEEDGEKPKKRGPKKKKMTKA). The segment covering 44–55 (DGEEDDEEEEDG) has biased composition (acidic residues). Positions 58–70 (PKKRGPKKKKMTK) are enriched in basic residues. Residues 78-130 (VRRVKANARERSRMHGLNDALENLRRVMPCYSKTQKLSKIETLRLARNYIWAL) form the bHLH domain. Ser-89 carries the post-translational modification Phosphoserine.

As to quaternary structure, efficient DNA binding requires dimerization with another bHLH protein. Forms a heterodimer with the bHLH protein hes2, and weakly interacts with hey1/hrt1. Post-translationally, serine or threonine phosphorylation within the basic region may regulate neurogenic activity. First expressed weakly at stage 12 in primary neuronal precursors. At stages 18 and 21, strongly expressed in the cranial ganglions, with weaker expression remaining in the spinal cord. Later, strongly expressed at sites of neuronal differentiation, namely the eye, forebrain and cranial ganglions.

The protein resides in the nucleus. Probably acts as a transcriptional activator. Mediates neuronal differentiation. Required for the regulation of amacrine cell fate specification in the retina. The protein is Neurogenic differentiation factor 4 (neurod4) of Xenopus laevis (African clawed frog).